Reading from the N-terminus, the 864-residue chain is DNA mismatch repair protein MutS (864 aa).

613–620 (GPNMGGKS) provides a ligand contact to ATP.

The protein belongs to the DNA mismatch repair MutS family.

In terms of biological role, this protein is involved in the repair of mismatches in DNA. It is possible that it carries out the mismatch recognition step. This protein has a weak ATPase activity. This chain is DNA mismatch repair protein MutS, found in Actinobacillus pleuropneumoniae serotype 7 (strain AP76).